Here is a 1276-residue protein sequence, read N- to C-terminus: Probable histone acetyltransferase HAC-like 3 (1276 aa).

Positions 391–421 (VDRAEQTSNSTVSKPTSPASDGSSGKHYPAK) are disordered. A compositionally biased stretch (polar residues) spans 396 to 413 (QTSNSTVSKPTSPASDGS). Residues 621–689 (SSICGRCHHL…EYTCAKCFLK (69 aa)) form a PHD-type zinc finger. In terms of domain architecture, CBP/p300-type HAT spans 704 to 1130 (ILGARELPRT…ILYHLHDSTC (427 aa)). Acetyl-CoA is bound by residues 827–829 (IDS), 846–847 (RT), and Trp-902. Residues 953-973 (EAERLLEKKDDDTSQKKETQL) adopt a coiled-coil conformation. 2 ZZ-type zinc fingers span residues 1013–1076 (CLQQ…EEPL) and 1125–1187 (LHDS…LQDY). Zn(2+) is bound by residues Cys-1018, Cys-1021, Cys-1033, Cys-1036, Cys-1042, Cys-1045, His-1058, His-1066, Cys-1130, Cys-1133, Cys-1145, Cys-1148, Cys-1154, Cys-1157, His-1168, and His-1177. The TAZ-type zinc finger occupies 1177–1260 (HVLQKYTLQD…DCSAPRCRDI (84 aa)).

The protein resides in the nucleus. It carries out the reaction L-lysyl-[protein] + acetyl-CoA = N(6)-acetyl-L-lysyl-[protein] + CoA + H(+). Its function is as follows. Acetyltransferase enzyme. Acetylates histones, giving a specific tag for transcriptional activation. This Oryza sativa subsp. japonica (Rice) protein is Probable histone acetyltransferase HAC-like 3.